A 190-amino-acid polypeptide reads, in one-letter code: Elongation factor P (190 aa).

Belongs to the elongation factor P family.

It localises to the cytoplasm. The protein operates within protein biosynthesis; polypeptide chain elongation. Involved in peptide bond synthesis. Stimulates efficient translation and peptide-bond synthesis on native or reconstituted 70S ribosomes in vitro. Probably functions indirectly by altering the affinity of the ribosome for aminoacyl-tRNA, thus increasing their reactivity as acceptors for peptidyl transferase. This Amoebophilus asiaticus (strain 5a2) protein is Elongation factor P.